A 132-amino-acid polypeptide reads, in one-letter code: MNLIEQLEREEIERLGKTIPDFSPGDTLVVNVNVVEGDRKRVQAFEGVVIAKRNRGLNSSFIVRKISSGEAVERTFQTYSPLIASMEVKRRGAVRRAKLYYLRDRSGKAARIREKLPARSVQQENVAEALQP.

Belongs to the bacterial ribosomal protein bL19 family.

Functionally, this protein is located at the 30S-50S ribosomal subunit interface and may play a role in the structure and function of the aminoacyl-tRNA binding site. The protein is Large ribosomal subunit protein bL19 of Nitrosomonas europaea (strain ATCC 19718 / CIP 103999 / KCTC 2705 / NBRC 14298).